A 154-amino-acid chain; its full sequence is Nuclear cap-binding protein subunit 2 (154 aa).

MRNA is bound by residues Tyr-10, Tyr-33, 102–106 (RCDWD), 113–117 (RQYGR), and 123–124 (QV). The 79-residue stretch at 30–108 (STLYMGNLSF…RIIRCDWDAG (79 aa)) folds into the RRM domain.

This sequence belongs to the RRM NCBP2 family. As to quaternary structure, component of the nuclear cap-binding complex (CBC), a heterodimer composed of Cbp80 and Cbp20 that interacts with m7GpppG-capped RNA.

It is found in the nucleus. In terms of biological role, component of the cap-binding complex (CBC), which binds co-transcriptionally to the 5' cap of pre-mRNAs and is involved in various processes such as pre-mRNA splicing and RNA-mediated gene silencing (RNAi). The CBC complex is involved in miRNA-mediated RNA interference and is required for primary microRNAs (miRNAs) processing. Also involved in innate immunity via the short interfering RNAs (siRNAs) processing machinery by restricting the viral RNA production. In the CBC complex, Cbp20 recognizes and binds capped RNAs (m7GpppG-capped RNA) but requires Cbp80 to stabilize the movement of its N-terminal loop and lock the CBC into a high affinity cap-binding state with the cap structure. This Bombyx mori (Silk moth) protein is Nuclear cap-binding protein subunit 2.